Consider the following 278-residue polypeptide: Coiled-coil domain-containing protein 121 (278 aa).

Coiled-coil stretches lie at residues 1–30 (MTDL…REKL) and 105–243 (QAMR…LIQA). The segment at 253 to 278 (QCLNRQDVPKTTPSLPQGTKSRINPK) is disordered.

The chain is Coiled-coil domain-containing protein 121 (CCDC121) from Homo sapiens (Human).